A 564-amino-acid polypeptide reads, in one-letter code: Major facilitator superfamily transporter MPN_076 (564 aa).

12 consecutive transmembrane segments (helical) span residues 1–21 (MLWAIVLLGYLLFVVEWFVID), 65–85 (ITLLRAVGSVLCGIVVLKFGY), 89–109 (VMIMMGLMCLCFPFLIIGDPL), 176–196 (IAGYALFIIFRSTIAIGGTTL), 220–240 (NLWGFNSGIVVAFVPFLFQSV), 249–269 (VFILTALILIGFGILCVFAWF), 306–326 (MIGMYGICLVVLVNPLTGGWW), 358–378 (AGLPTLAILWVLGYGMGYMVF), 404–424 (IVIVLFAATLGVGTAVGFAFV), 425–445 (AIATFIGGSFAWSMQSTILIL), 457–477 (VSVLFGYIWGFGYVIYTAFDI), and 501–521 (GAIAGVALFAGLLLAAIAIVV).

It belongs to the major facilitator superfamily.

It is found in the cell membrane. This Mycoplasma pneumoniae (strain ATCC 29342 / M129 / Subtype 1) (Mycoplasmoides pneumoniae) protein is Major facilitator superfamily transporter MPN_076.